Here is a 268-residue protein sequence, read N- to C-terminus: MADS-box protein FBP24 (268 aa).

One can recognise an MADS-box domain in the interval 4 to 64 (MGRGKIEVKR…GKLFEYCSQP (61 aa)). Positions 88 to 178 (RVQLYDEVAK…YQWLMNNQMY (91 aa)) constitute a K-box domain. The segment at 243–268 (NSISPYRLQPSHPNLQDSHVHGPSYD) is disordered.

Its subcellular location is the nucleus. Its function is as follows. Probable transcription factor. This chain is MADS-box protein FBP24 (FBP24), found in Petunia hybrida (Petunia).